The following is a 298-amino-acid chain: H-2 class I histocompatibility antigen, alpha chain (298 aa).

The Extracellular portion of the chain corresponds to 1-244 (RYEPRARWIE…EPPSSTKTNT (244 aa)). The N-linked (GlcNAc...) asparagine glycan is linked to Asn-43. The cysteines at positions 58 and 121 are disulfide-linked. N-linked (GlcNAc...) asparagine glycosylation occurs at Asn-133. One can recognise an Ig-like C1-type domain in the interval 142 to 230 (PKAHVTHHRR…EGLPEPLTLR (89 aa)). The cysteines at positions 160 and 216 are disulfide-linked. Residues 245 to 265 (VIIAVPVVLGAVVILGAVMAF) form a helical membrane-spanning segment. The Cytoplasmic segment spans residues 266 to 298 (VMKRRRNTGGKGGDYALAPVSQSSDMSLPDCKV). The disordered stretch occupies residues 277–298 (GGDYALAPVSQSSDMSLPDCKV). A phosphoserine mark is found at Ser-289 and Ser-292.

The protein belongs to the MHC class I family. As to quaternary structure, heterodimer of an alpha chain and a beta chain (beta-2-microglobulin).

Its subcellular location is the membrane. In terms of biological role, involved in the presentation of foreign antigens to the immune system. This Mus musculus (Mouse) protein is H-2 class I histocompatibility antigen, alpha chain (H2-D1).